Consider the following 92-residue polypeptide: UPF0237 protein MM_0082 (92 aa).

The 75-residue stretch at 7 to 81 folds into the ACT domain; the sequence is IITVIGSDRV…KSLGVEVKVQ (75 aa).

The protein belongs to the UPF0237 family.

The protein is UPF0237 protein MM_0082 of Methanosarcina mazei (strain ATCC BAA-159 / DSM 3647 / Goe1 / Go1 / JCM 11833 / OCM 88) (Methanosarcina frisia).